The chain runs to 413 residues: Putative acid phosphatase 11 (413 aa).

The active-site Nucleophile is the H35. D315 functions as the Proton donor in the catalytic mechanism. A disulfide bridge links C381 with C387.

The protein belongs to the histidine acid phosphatase family.

It catalyses the reaction a phosphate monoester + H2O = an alcohol + phosphate. The sequence is that of Putative acid phosphatase 11 (pho-11) from Caenorhabditis elegans.